The primary structure comprises 354 residues: Ferredoxin--NADP reductase (354 aa).

7 residues coordinate FAD: D42, Q50, Y55, I95, F130, D299, and T339.

This sequence belongs to the ferredoxin--NADP reductase type 2 family. In terms of assembly, homodimer. FAD is required as a cofactor.

The enzyme catalyses 2 reduced [2Fe-2S]-[ferredoxin] + NADP(+) + H(+) = 2 oxidized [2Fe-2S]-[ferredoxin] + NADPH. This is Ferredoxin--NADP reductase from Acidovorax sp. (strain JS42).